We begin with the raw amino-acid sequence, 177 residues long: Disulfide bond formation protein B (177 aa).

Over 1–14 (MLALLKQFSEKRFV) the chain is Cytoplasmic. The helical transmembrane segment at 15–31 (WFLLAFSSLALESTALY) threads the bilayer. The Periplasmic portion of the chain corresponds to 32 to 49 (FQYGMGLQPCVLCVYERL). A disulfide bond links Cys-41 and Cys-44. A helical membrane pass occupies residues 50-65 (AMIGLFVAGTIALLQP). Over 66–72 (RVFILRL) the chain is Cytoplasmic. The chain crosses the membrane as a helical span at residues 73-90 (IALALGLFSSIKGLLISF). The Periplasmic segment spans residues 91–145 (RHLDLQMNPAPWKQCEFIPNFPETLPFHQWFPFIFNPTGSCNESQWSLFGLTMVQ). Cysteines 105 and 131 form a disulfide. Residues 146-164 (WLVVIFSLYVVILTLLLIA) traverse the membrane as a helical segment. The Cytoplasmic portion of the chain corresponds to 165-177 (QVIKTRKQRRLFN).

The protein belongs to the DsbB family.

The protein resides in the cell inner membrane. Required for disulfide bond formation in some periplasmic proteins. Acts by oxidizing the DsbA protein. The sequence is that of Disulfide bond formation protein B from Haemophilus influenzae (strain ATCC 51907 / DSM 11121 / KW20 / Rd).